Consider the following 389-residue polypeptide: N-terminal EF-hand calcium-binding protein 2 (389 aa).

Omega-N-methylarginine is present on R10. R42 carries the asymmetric dimethylarginine modification. 2 consecutive EF-hand domains span residues G63–N98 and E99–D132. Positions 76, 78, 80, 82, 87, 110, 112, 114, 116, and 121 each coordinate Ca(2+). Residues L173–T198 adopt a coiled-coil conformation. The ABM domain maps to Q289 to I377.

In terms of assembly, interacts (calcium-dependent) with ADORA2A and GRM5. In terms of tissue distribution, expressed in the iris, in the ciliary margin of the retina and in the inner portion of the neural retina. Expressed in the spinal dorsal horn with especially strong expression in lamina IIi; found in excitory synaptic boutons (at protein level).

The protein localises to the cytoplasm. It localises to the cell projection. It is found in the dendrite. Its subcellular location is the axon. The protein resides in the cell membrane. Functionally, may act as a signaling scaffold protein that senses intracellular calcium. Can modulate ligand-induced internalization of ADORA2A and coupling efficiency of mGluR5/GRM5; for both receptors may regulate signaling activity such as promoting MAPK1/3 (ERK1/2) activation. This chain is N-terminal EF-hand calcium-binding protein 2 (Necab2), found in Mus musculus (Mouse).